The following is a 585-amino-acid chain: Arginine--tRNA ligase (585 aa).

The 'HIGH' region motif lies at 130 to 140 (ANPTGPMHVGH).

The protein belongs to the class-I aminoacyl-tRNA synthetase family. As to quaternary structure, monomer.

The protein localises to the cytoplasm. The catalysed reaction is tRNA(Arg) + L-arginine + ATP = L-arginyl-tRNA(Arg) + AMP + diphosphate. The sequence is that of Arginine--tRNA ligase from Methylorubrum extorquens (strain PA1) (Methylobacterium extorquens).